A 370-amino-acid chain; its full sequence is Platelet-derived growth factor D (370 aa).

A signal peptide spans 1 to 23 (MQRLVLVSILLCANFSCYPDTFA). One can recognise a CUB domain in the interval 52–170 (REENIQVTSN…PGFKIYYSFV (119 aa)). A disulfide bridge links Cys-109 with Cys-131. N-linked (GlcNAc...) asparagine glycosylation is present at Asn-276. Intrachain disulfides connect Cys-302–Cys-360 and Cys-306–Cys-362.

Belongs to the PDGF/VEGF growth factor family. As to quaternary structure, homodimer; disulfide-linked. Interacts with PDGFRB homodimers, and with heterodimers formed by PDGFRA and PDGFRB. In terms of processing, activated by proteolytic cleavage. Proteolytic removal of the N-terminal CUB domain releasing the core domain is necessary for unmasking the receptor-binding epitopes of the core domain. Cleavage after Arg-247 or Arg-249 by urokinase plasminogen activator gives rise to the active form. In terms of tissue distribution, expressed at high levels in developing heart, lung, kidney and some muscle derivatives. Moderately expressed in liver, brain and testis. In the kidney, localized to glomerular mesangial cells and vascular smooth muscle cells. Up-regulated in areas of renal fibrosis. In mice with unilateral ureteral obstruction, expressed in interstitial cells at day 4, with an increased to maximal expression at day 14.

It localises to the secreted. Functionally, growth factor that plays an essential role in the regulation of embryonic development, cell proliferation, cell migration, survival and chemotaxis. Potent mitogen for cells of mesenchymal origin. Plays an important role in wound healing. Has oncogenic potential and can induce tumor formation. Induces macrophage recruitment, increased interstitial pressure, and blood vessel maturation during angiogenesis. Can initiate events that lead to a mesangial proliferative glomerulonephritis, including influx of monocytes and macrophages and production of extracellular matrix. This Mus musculus (Mouse) protein is Platelet-derived growth factor D (Pdgfd).